The sequence spans 424 residues: Kynureninase (424 aa).

Residues L106, T107, 134–137 (FPSD), D219, H222, and Y244 each bind pyridoxal 5'-phosphate. Residue K245 is modified to N6-(pyridoxal phosphate)lysine. 2 residues coordinate pyridoxal 5'-phosphate: W274 and N302.

It belongs to the kynureninase family. As to quaternary structure, homodimer. Requires pyridoxal 5'-phosphate as cofactor.

It carries out the reaction L-kynurenine + H2O = anthranilate + L-alanine + H(+). It catalyses the reaction 3-hydroxy-L-kynurenine + H2O = 3-hydroxyanthranilate + L-alanine + H(+). It functions in the pathway amino-acid degradation; L-kynurenine degradation; L-alanine and anthranilate from L-kynurenine: step 1/1. It participates in cofactor biosynthesis; NAD(+) biosynthesis; quinolinate from L-kynurenine: step 2/3. Functionally, catalyzes the cleavage of L-kynurenine (L-Kyn) and L-3-hydroxykynurenine (L-3OHKyn) into anthranilic acid (AA) and 3-hydroxyanthranilic acid (3-OHAA), respectively. This is Kynureninase from Xanthomonas campestris pv. campestris (strain B100).